Reading from the N-terminus, the 321-residue chain is Lipoyl synthase (321 aa).

Cys-68, Cys-73, Cys-79, Cys-94, Cys-98, Cys-101, and Ser-308 together coordinate [4Fe-4S] cluster. The Radical SAM core domain occupies 80 to 297; the sequence is FNHGTATFMI…KALADELGFT (218 aa).

This sequence belongs to the radical SAM superfamily. Lipoyl synthase family. [4Fe-4S] cluster is required as a cofactor.

Its subcellular location is the cytoplasm. It carries out the reaction [[Fe-S] cluster scaffold protein carrying a second [4Fe-4S](2+) cluster] + N(6)-octanoyl-L-lysyl-[protein] + 2 oxidized [2Fe-2S]-[ferredoxin] + 2 S-adenosyl-L-methionine + 4 H(+) = [[Fe-S] cluster scaffold protein] + N(6)-[(R)-dihydrolipoyl]-L-lysyl-[protein] + 4 Fe(3+) + 2 hydrogen sulfide + 2 5'-deoxyadenosine + 2 L-methionine + 2 reduced [2Fe-2S]-[ferredoxin]. It functions in the pathway protein modification; protein lipoylation via endogenous pathway; protein N(6)-(lipoyl)lysine from octanoyl-[acyl-carrier-protein]: step 2/2. Its function is as follows. Catalyzes the radical-mediated insertion of two sulfur atoms into the C-6 and C-8 positions of the octanoyl moiety bound to the lipoyl domains of lipoate-dependent enzymes, thereby converting the octanoylated domains into lipoylated derivatives. The protein is Lipoyl synthase of Shewanella baltica (strain OS223).